A 136-amino-acid polypeptide reads, in one-letter code: Large ribosomal subunit protein uL16 (136 aa).

The protein belongs to the universal ribosomal protein uL16 family. As to quaternary structure, part of the 50S ribosomal subunit.

Binds 23S rRNA and is also seen to make contacts with the A and possibly P site tRNAs. This is Large ribosomal subunit protein uL16 from Pelagibacter ubique (strain HTCC1062).